The chain runs to 466 residues: Fez family zinc finger protein 1 (466 aa).

Residues 34-49 carry the Engrailed homology 1 repressor motif; the sequence is PLAFSIERIMSRTPEP. 6 consecutive C2H2-type zinc fingers follow at residues 261–283, 289–311, 317–339, 345–367, 373–395, and 401–424; these read FTCEVCGKVFNAHYNLTRHMPVH, FVCKICGKGFRQASTLCRHKIIH, HKCNQCGKAFNRSSTLNTHTRIH, FVCEFCGKGFHQKGNYKNHKLTH, FKCNICNKAFHQIYNLTFHMHTH, and FTCPTCGKGFCRNFDLKKHVRKLH. Positions 446-466 are disordered; that stretch reads LPNREQSHTIIQSPQLQKSVY. Polar residues predominate over residues 453–466; sequence HTIIQSPQLQKSVY.

This sequence belongs to the krueppel C2H2-type zinc-finger protein family.

The protein localises to the nucleus. Its function is as follows. Transcription repressor. Involved in the development of the forebrain region. This Xenopus laevis (African clawed frog) protein is Fez family zinc finger protein 1 (fezf1).